The chain runs to 332 residues: uncharacterized protein (332 aa).

The chain crosses the membrane as a helical span at residues 185 to 205 (MVYGYSVFNAFFILLALPNVI).

The protein localises to the host membrane. This is an uncharacterized protein from Sulfolobus islandicus filamentous virus (isolate Iceland/Hveragerdi) (SIFV).